Here is a 462-residue protein sequence, read N- to C-terminus: C4-dicarboxylate transport transcriptional regulatory protein DctD (462 aa).

The region spanning Gln-12–Leu-126 is the Response regulatory domain. Position 61 is a 4-aspartylphosphate (Asp-61). In terms of domain architecture, Sigma-54 factor interaction spans Leu-152 to Leu-381. Residues Gly-180 to Glu-187 and Ala-243 to Glu-252 each bind ATP.

In terms of processing, phosphorylated by DctB.

Member of the two-component regulatory system DctB/DctD, which regulates C4-dicarboxylate transport via regulation of expression of the dctPQM operon and dctA. The sequence is that of C4-dicarboxylate transport transcriptional regulatory protein DctD from Pseudomonas aeruginosa (strain ATCC 15692 / DSM 22644 / CIP 104116 / JCM 14847 / LMG 12228 / 1C / PRS 101 / PAO1).